The following is a 542-amino-acid chain: Isocitrate lyase (542 aa).

Position 102–104 (102–104) interacts with substrate; it reads SGW. Asp-170 provides a ligand contact to Mg(2+). Cys-208 (proton acceptor) is an active-site residue. Residues 209–210, Arg-245, 428–432, and Thr-462 each bind substrate; these read GH and NLSPS.

This sequence belongs to the isocitrate lyase/PEP mutase superfamily. Isocitrate lyase family. As to quaternary structure, homotetramer. Requires Mg(2+) as cofactor.

The protein resides in the glyoxysome. It carries out the reaction D-threo-isocitrate = glyoxylate + succinate. The catalysed reaction is (2S,3R)-3-hydroxybutane-1,2,3-tricarboxylate = pyruvate + succinate. It participates in carbohydrate metabolism; glyoxylate cycle; (S)-malate from isocitrate: step 1/2. Catalyzes the formation of succinate and glyoxylate from isocitrate, a key step of the glyoxylate cycle, which operates as an anaplerotic route for replenishing the tricarboxylic acid cycle. Required for growth on ethanol or acetate, but dispensable when fermentable carbon sources are available. Also acts on 2-methylisocitrate. The sequence is that of Isocitrate lyase from Kluyveromyces lactis (strain ATCC 8585 / CBS 2359 / DSM 70799 / NBRC 1267 / NRRL Y-1140 / WM37) (Yeast).